Reading from the N-terminus, the 125-residue chain is Multifunctional methyltransferase subunit TRM112-like protein (125 aa).

The TRM112 domain maps to 2-121 (KLFVHNFMSS…RDGIPNMLKV (120 aa)).

This sequence belongs to the TRM112 family.

Its subcellular location is the nucleus. The protein localises to the nucleoplasm. It is found in the cytoplasm. The protein resides in the perinuclear region. Functionally, acts as an activator of both RNA and protein methyltransferases. The polypeptide is Multifunctional methyltransferase subunit TRM112-like protein (Caenorhabditis elegans).